Consider the following 620-residue polypeptide: Glutathione-regulated potassium-efflux system protein KefC (620 aa).

Residues 1 to 3 lie on the Periplasmic side of the membrane; that stretch reads MDS. The helical transmembrane segment at 4 to 24 threads the bilayer; the sequence is HTLLQALIYLGSAALIVPIAV. Arginine 25 is a topological domain (cytoplasmic). Residues 26-46 traverse the membrane as a helical segment; sequence LGLGSVLGYLIAGCIIGPWGL. The Periplasmic segment spans residues 47–53; sequence RLVTDAE. A helical transmembrane segment spans residues 54 to 74; the sequence is SILHFAEIGVVLMLFVIGLEL. Residues 75-89 lie on the Cytoplasmic side of the membrane; sequence DPQRLWKLRASVFGG. The helical transmembrane segment at 90–110 threads the bilayer; it reads GALQMVVCGGLIGLFCMFLGL. At 111 to 113 the chain is on the periplasmic side; sequence RWQ. A helical transmembrane segment spans residues 114–134; that stretch reads VAELIGMTLALSSTAIAMQAM. At 135 to 148 the chain is on the cytoplasmic side; the sequence is NERNLTVSQVGRSA. The chain crosses the membrane as a helical span at residues 149–169; the sequence is FAVLLFQDIAAIPLVAMIPLL. At 170 to 177 the chain is on the periplasmic side; it reads AASGASTT. Residues 178–198 traverse the membrane as a helical segment; sequence LGAFALSALKVAGALALVVLL. Topologically, residues 199-213 are cytoplasmic; the sequence is GRYVTRPALRFVARS. Residues 214–233 form a helical membrane-spanning segment; that stretch reads GLREVFSAVALFLVFGFGLL. Residues 234 to 236 lie on the Periplasmic side of the membrane; sequence LEE. The chain crosses the membrane as a helical span at residues 237-254; that stretch reads VGLSMAMGAFLAGVLLAS. Topologically, residues 255–269 are cytoplasmic; sequence SEYRHALESDIEPFK. A helical membrane pass occupies residues 270–290; that stretch reads GLLLGLFFIGVGMSIDFGTLV. Over 291-293 the chain is Periplasmic; that stretch reads ENP. Residues 294–314 traverse the membrane as a helical segment; that stretch reads LRILLLLAGFLAIKIVMLWLV. The Cytoplasmic segment spans residues 315–326; it reads ARTLGVPAKQRR. Residues 327 to 347 traverse the membrane as a helical segment; it reads WFAVLLGQGSEFAFVVFGAAQ. At 348–358 the chain is on the periplasmic side; it reads MADVLEPEWAK. The helical transmembrane segment at 359–379 threads the bilayer; sequence ALTLAVALSMAATPIFLVLLT. The Cytoplasmic portion of the chain corresponds to 380–620; it reads RMEKTATGEA…ADEPEVKPSI (241 aa). Residues 399-518 enclose the RCK N-terminal domain; sequence QPRVIVAGFG…AGVAMPERET (120 aa). The segment at 599–620 is disordered; sequence QGTAEGKHSGKAADEPEVKPSI. A compositionally biased stretch (basic and acidic residues) spans 603–620; that stretch reads EGKHSGKAADEPEVKPSI.

Belongs to the monovalent cation:proton antiporter 2 (CPA2) transporter (TC 2.A.37) family. KefC subfamily. Homodimer. Interacts with the regulatory subunit KefF.

It localises to the cell inner membrane. Functionally, pore-forming subunit of a potassium efflux system that confers protection against electrophiles. Catalyzes K(+)/H(+) antiport. In Salmonella typhi, this protein is Glutathione-regulated potassium-efflux system protein KefC.